A 61-amino-acid chain; its full sequence is Type IV secretion system protein PtlI homolog (61 aa).

The N-terminal stretch at 1–25 (MIHAHSNARLLRWAILAIAPATLGA) is a signal peptide. The tract at residues 29-61 (NGPPGLPYPDGKPLIPINTAAPEQGSSCQTRAP) is disordered. Over residues 52-61 (QGSSCQTRAP) the composition is skewed to polar residues.

The protein is Type IV secretion system protein PtlI homolog (ptlI) of Bordetella bronchiseptica (strain ATCC BAA-588 / NCTC 13252 / RB50) (Alcaligenes bronchisepticus).